The primary structure comprises 411 residues: Diels-Alderase ffsF (411 aa).

The first 17 residues, 1-17, serve as a signal peptide directing secretion; the sequence is MTQIKLLLLSLAITAQS.

This sequence belongs to the Diels-Alderase family.

The protein operates within mycotoxin biosynthesis. Diels-Alderase; part of the gene cluster that mediates the biosynthesis of the cytotoxic leucine-containing cytochalasans, including aspochalasin C, aspochalasin E, TMC-169, flavichalasine F, aspergillin PZ, aspochalasin M and flavichalasine G. The first step in the pathway is catalyzed by the hybrid PKS-NRPS ffsA that utilizes 8 units of malonyl-CoA to iteratively assemble the octaketide chain before addition of L-leucine by the C-terminal NRPS modules. Because ffsA lacks a designated enoylreductase (ER) domain, the required activity is provided the enoyl reductase fssC. The methyltransferase (MT) domain of ffsA catalyzes the alpha-methylation at C10 and C14 using S-adenosyl-L-methionine as the methyl-donating cosubstrate. Reduction by the hydrolyase ffsE, followed by dehydration and intra-molecular Diels-Alder cyclization by the Diels-Alderase ffsF then yield the required isoindolone-fused macrocycle. A number of oxidative steps catalyzed by the tailoring cytochrome P450 monooxygenase ffsD, the FAD-linked oxidoreductase ffsJ and the short-chain dehydrogenase/reductase ffsI, are further required to afford the final products. In Aspergillus flavipes, this protein is Diels-Alderase ffsF.